Reading from the N-terminus, the 664-residue chain is Putative peroxisomal acyl-coenzyme A oxidase 1.2 (664 aa).

C399–Y404 provides a ligand contact to FAD. A Microbody targeting signal motif is present at residues A662–L664.

The protein belongs to the acyl-CoA oxidase family. Requires FAD as cofactor.

It localises to the peroxisome. It catalyses the reaction a 2,3-saturated acyl-CoA + O2 = a (2E)-enoyl-CoA + H2O2. Functionally, catalyzes the desaturation of acyl-CoAs to 2-trans-enoyl-CoAs. The protein is Putative peroxisomal acyl-coenzyme A oxidase 1.2 (ACX1.2) of Arabidopsis thaliana (Mouse-ear cress).